We begin with the raw amino-acid sequence, 149 residues long: 3-dehydroquinate dehydratase (149 aa).

Y26 functions as the Proton acceptor in the catalytic mechanism. N77, H83, and D90 together coordinate substrate. Residue H103 is the Proton donor of the active site. Residues 104-105 and R114 contribute to the substrate site; that span reads LS.

This sequence belongs to the type-II 3-dehydroquinase family. In terms of assembly, homododecamer.

It catalyses the reaction 3-dehydroquinate = 3-dehydroshikimate + H2O. It participates in metabolic intermediate biosynthesis; chorismate biosynthesis; chorismate from D-erythrose 4-phosphate and phosphoenolpyruvate: step 3/7. Catalyzes a trans-dehydration via an enolate intermediate. This Aliivibrio salmonicida (strain LFI1238) (Vibrio salmonicida (strain LFI1238)) protein is 3-dehydroquinate dehydratase.